Reading from the N-terminus, the 215-residue chain is Abscisic acid receptor PYL6 (215 aa).

An START-like region spans residues 54-209 (HVVGPSQCFS…NLQSLAKLAE (156 aa)). A disulfide bridge connects residues cysteine 61 and cysteine 190. Abscisate-binding positions include lysine 90, 120–125 (AAFSLE), 147–153 (RLMNYKS), and glutamate 174. The short motif at 116–120 (SGLPA) is the Gate loop element. The short motif at 146 to 148 (HRL) is the Latch loop element.

Belongs to the PYR/PYL/RCAR abscisic acid intracellular receptor family. Monomer. Homodimer. Binds ABA on one subunit only. Interacts with HAB1, ABI1 and ABI2, and possibly with other PP2Cs. Binds to CARs protein in an ABA-independent manner, both at the plasma membrane and in the nucleus. Interacts directly with CAR1 and CAR4. Interacts with MYC2 in the nucleus. Interaction with MYC2 is increased in the presence of abscisic acid.

It is found in the cytoplasm. Its subcellular location is the nucleus. The protein resides in the cell membrane. Receptor for abscisic acid (ABA) required for ABA-mediated responses such as stomatal closure and germination inhibition. Inhibits the activity of group-A protein phosphatases type 2C (PP2Cs) in an ABA-independent manner but more efficiently when activated by ABA. Can be activated by both (-)-ABA and (+)-ABA. May link ABA and jasmonate signaling pathways by modifying MYC2 transcriptional activity, and regulation of JAZ6 and JAZ8 gene expression by MYC2. This Arabidopsis thaliana (Mouse-ear cress) protein is Abscisic acid receptor PYL6 (PYL6).